The primary structure comprises 331 residues: Adenosine deaminase (331 aa).

Zn(2+) contacts are provided by H12 and H14. 3 residues coordinate substrate: H14, D16, and G170. A Zn(2+)-binding site is contributed by H197. The active-site Proton donor is the E200. Residue D278 participates in Zn(2+) binding. D279 is a binding site for substrate.

It belongs to the metallo-dependent hydrolases superfamily. Adenosine and AMP deaminases family. Adenosine deaminase subfamily. Requires Zn(2+) as cofactor.

The catalysed reaction is adenosine + H2O + H(+) = inosine + NH4(+). It carries out the reaction 2'-deoxyadenosine + H2O + H(+) = 2'-deoxyinosine + NH4(+). Its function is as follows. Catalyzes the hydrolytic deamination of adenosine and 2-deoxyadenosine. The chain is Adenosine deaminase from Shewanella oneidensis (strain ATCC 700550 / JCM 31522 / CIP 106686 / LMG 19005 / NCIMB 14063 / MR-1).